The following is a 367-amino-acid chain: Cyclin-Y-like protein 1 (367 aa).

S73, S111, and S118 each carry phosphoserine. In terms of domain architecture, Cyclin N-terminal spans 186 to 291 (EYFKHDPEHK…FLELLQFNIN (106 aa)). S352 bears the Phosphoserine mark.

The protein belongs to the cyclin family. Cyclin Y subfamily. Interacts with CDK16; this interaction mutually increases the stability of CDK16 and CCNYL1 and increases the kinase activity of CDK16. In terms of tissue distribution, highly expressed in the testis. Largely restricted to germ cells in the testis.

It localises to the cell membrane. Key regulator of Wnt signaling implicated in various biological processes including male fertility, embryonic neurogenesis and cortex development. Activates the cyclin-dependent kinase CDK16, and promotes sperm maturation. This chain is Cyclin-Y-like protein 1, found in Mus musculus (Mouse).